Here is a 383-residue protein sequence, read N- to C-terminus: Polyketide synthase 4 (383 aa).

Cys164 acts as the Nucleophile and monoketide coumarate intermediate in catalysis.

This sequence belongs to the thiolase-like superfamily. Chalcone/stilbene synthases family. Homodimer. Expressed in fruits.

The catalysed reaction is 4-coumaroyl-CoA + malonyl-CoA + H2O + H(+) = 4-hydroxybenzalacetone + 2 CO2 + 2 CoA. It catalyses the reaction (E)-4-coumaroyl-CoA + 3 malonyl-CoA + 3 H(+) = 2',4,4',6'-tetrahydroxychalcone + 3 CO2 + 4 CoA. It participates in secondary metabolite biosynthesis; flavonoid biosynthesis. Inhibited by glutathione. Bifunctional polyketide synthase producing both 4-hydroxybenzalacetone and naringenin chalcone. Can use p-coumaryl-CoA and ferulyl-CoA as substrates. Catalyzes the initial key reaction step in the biosynthesis of phenylbutanoids. The chain is Polyketide synthase 4 (PKS4) from Rubus idaeus (Raspberry).